The chain runs to 1409 residues: MAVGTASLQDRLETWAQRLKNLTVSPLTRDYPDTQKTDSKRVIEAFESLQLPKAKLTGSSSSFIAFLTAFIILVARLTGDEDIAVGTNSNEDGRAFVIRVPIDTSESFAQLYAKVDKAYKEGSSQIVPLGSLRSYIQEKSKSERTPVLFRFAAYDAPASSQDYPANTFDTTDLVVNVAPGSAEVELGAYYNQRLFSSARIAFILKQLASIASNAAANPDEAIGRIDLMTEDQRALLPDPTCNLNWSNFRGAIHDIFTANAERHPEKLCVVETQSSSSPHREFTYRQINEASNILGHHLVRSGIQRGEVVMVYAYRGVDLVVAVMGILKAGATFSVIDPAYPPERQNIYLDVARPRALVNIAKATKDAGELSDIVRTFIDENLELRTEIPALALLDDGTLAGGSINGQDVFANDVALKSKPTGVVVGPDSIPTLSFTSGSEGRPKGVRGRHFSLAYYFPWMSETFKLTPDEKFTMLSGIAHDPIQRDIFTPLFLGAQLLVPAREDIQNEKLAEWIEKYGATITHLTPAMGQILVGGASAQFPALHHAFFVGDILIKRDCRSLQGLAPNVSIVNMYGTTETQRAVSYYEIPSYASNEGYLNNMKDVIMAGRGMLDVQMLVVNRYDPTRLCAIGEVGEIYVRAGGLAEGYLGSPELSAKKFLNNWFVNPEIWAEKDQAESRNEPWRQFYVGPRDRLYRSGDLGRYTPSGDVECSGRADDQVKIRGFRIELGEIDTHLSQHPLVRENVTLVRRDKDEEPTLVSYFVPDMNKWASWLESKGLKDDDSDSEGMVGLLRRFRPLRDDAREHLRTKLPTYAVPTVIIPLKRMPLNPNGKIDKPALPFPDTAELSAAAPRRASSALQALSETEQTLAQVWAKLIPNVTSRMIGPDDSFFDLGGHSILAQQMFFELRRKWRVIDISMNAIFRSPTLKGFASEIDRLLAMESFATSDDKTLAVQAANEPDDEYSKDAVQLVNELPKTFPQRTEAMLTSEPTVFLTGATGFLGAHILRDLLTRKSPSTKVVALVRAKTEELALERLRSTCRAYGFWDEAWTAKLQAVCGDLGKPQFGLSQSVWDDLTNRVDAVIHNGALVHWVYPYATLRPANVMGTIDALKLCASGKAKQFAFVSSTSALDKDRYVQESERIIAAGGNGISEDDDMEGSRVGLGTGYGQSKWAGEYLVKEAGRRGLRGTIVRSGYVLGDSVTGTTNTDDFLIRMLKGCIQIGLRPNIFNTVNMVPVDHVARIVIATAFHPPATGVNVAHVTGHPRLRFNQFLGALELYGYNVPQVDYVPWSTSLEQYVNDGEHNDKESQHALMPLYHFVTSDLPSNTKAPELDDVNAATALRADATWSGVDASAGAGVTEELVGLYASYLVQTGFLPAPTVAGARPLPAAQISEEQKKTLLSVGGRGGTS.

A Carrier domain is found at 858–937 (QALSETEQTL…GFASEIDRLL (80 aa)). Ser-896 bears the O-(pantetheine 4'-phosphoryl)serine mark.

This sequence belongs to the ATP-dependent AMP-binding enzyme family. In terms of assembly, heterodimer of an alpha and a beta subunit. It depends on pantetheine 4'-phosphate as a cofactor.

The enzyme catalyses (S)-2-amino-6-oxohexanoate + NADP(+) + H2O = L-2-aminoadipate + NADPH + 2 H(+). It catalyses the reaction (S)-2-amino-6-oxohexanoate + NAD(+) + H2O = L-2-aminoadipate + NADH + 2 H(+). It carries out the reaction (S)-2-amino-6-oxohexanoate + AMP + diphosphate + NADP(+) = L-2-aminoadipate + ATP + NADPH + H(+). The protein operates within amino-acid biosynthesis; L-lysine biosynthesis via AAA pathway; L-lysine from L-alpha-aminoadipate (fungal route): step 1/3. Functionally, catalyzes the activation of alpha-aminoadipate by ATP-dependent adenylation and the reduction of activated alpha-aminoadipate by NADPH. The activated alpha-aminoadipate is bound to the phosphopantheinyl group of the enzyme itself before it is reduced to (S)-2-amino-6-oxohexanoate. The protein is L-2-aminoadipate reductase large subunit (lys2) of Penicillium chrysogenum (Penicillium notatum).